A 394-amino-acid chain; its full sequence is Elongation factor Tu (394 aa).

The 195-residue stretch at 10–204 (KPHINVGTIG…FLDSYIPEPK (195 aa)) folds into the tr-type G domain. Residues 19–26 (GHVDHGKT) form a G1 region. 19 to 26 (GHVDHGKT) provides a ligand contact to GTP. Mg(2+) is bound at residue Thr26. The segment at 60 to 64 (GITIN) is G2. The tract at residues 81–84 (DCPG) is G3. Residues 81-85 (DCPGH) and 136-139 (NKCD) each bind GTP. Residues 136–139 (NKCD) are G4. The segment at 174–176 (SAL) is G5.

It belongs to the TRAFAC class translation factor GTPase superfamily. Classic translation factor GTPase family. EF-Tu/EF-1A subfamily. As to quaternary structure, monomer.

It localises to the cytoplasm. The catalysed reaction is GTP + H2O = GDP + phosphate + H(+). Functionally, GTP hydrolase that promotes the GTP-dependent binding of aminoacyl-tRNA to the A-site of ribosomes during protein biosynthesis. The protein is Elongation factor Tu of Buchnera aphidicola subsp. Acyrthosiphon pisum (strain 5A).